Consider the following 302-residue polypeptide: Protoheme IX farnesyltransferase (302 aa).

9 consecutive transmembrane segments (helical) span residues 26-46, 48-68, 98-118, 120-140, 148-168, 174-194, 221-241, 244-264, and 280-300; these read VVVL…PGQV, WVAL…AAAL, VLGF…LWIN, LTAA…TLYL, IVIG…AVTG, ALLL…ALAV, ILLY…TFMG, LYLA…VRLL, and IIYL…PVWL.

Belongs to the UbiA prenyltransferase family. Protoheme IX farnesyltransferase subfamily.

The protein localises to the cell inner membrane. It catalyses the reaction heme b + (2E,6E)-farnesyl diphosphate + H2O = Fe(II)-heme o + diphosphate. The protein operates within porphyrin-containing compound metabolism; heme O biosynthesis; heme O from protoheme: step 1/1. In terms of biological role, converts heme B (protoheme IX) to heme O by substitution of the vinyl group on carbon 2 of heme B porphyrin ring with a hydroxyethyl farnesyl side group. This is Protoheme IX farnesyltransferase from Alkalilimnicola ehrlichii (strain ATCC BAA-1101 / DSM 17681 / MLHE-1).